Consider the following 859-residue polypeptide: MGEVTAEEVEKFLDSNIGFAKQYYNFHYRGKVISDLLGAKEAAVDFSNYHDVNSVEESEIIFDLLRDVQENLQAEKCTFNVMKKLCFLLRADRMSLFMYRTRNGIAELATRLFNVHKDAVLEDCLVMPDSEIVFPLDMGVVGHVAHSKKIANVPNTEEDEHFCDFVDNLTEYQTKNILASPIMNGKDVVAIIMAVNKIDEPHFTKRDEEILLKYLNFVNLIMKVFHLSYLHNCETRRGQILLWSGSKVFEELTDIERQFHKALYTVRAFLNCDRYSVGLLDMTKQKEFFDVWPVLMGEAPAYSGPRTPDGREINFYKVIDYILHGKEDIKVIPNPPADHWALVSGLPTYVAQNGLICNIMNAPAEDFFEFQKEPLDESGWMIKNVLSMPIVNKKEEIVGVATFYNRKDGKPFDDMDETLMESLTQFLGWSVLNPDTYESMNKLENRKDIFQDIVKYHVKCDNEEIQKILKTREVYGKEPWECEEEELAEILQGELPDAESYEINKFHFSDLPLTELELVKCGIQMYYELRVVDKFHIPQEALVRFMYSLSKGYRRITYHNWRHGFNVGQTMFSLLVTGKLKRYFTDLEALAMVTAAFCHDIDHRGTNNLYQMKSQNPLAKLHGSSILERHHLEFGKTLLRDESLNIFQNLNRRQHEHAIHMMDIAIIATDLALYFKKRTMFQKIVDQSKTYESTQEWTQYMMLEQTRKEIVMAMMMTACDLSAITKPWEVQSKVALLVAAEFWEQGDLERTVLQQNPIPMMDRNKADELPKLQVGFIDFVCTFVYKEFSRFHEEITPMLDGITNNRKEWKALADEYEAKMKALEEEKQKQQAAKQAASGNQPGGNPLQGAPASKSCCIQ.

An N-acetylglycine modification is found at Gly2. GAF domains follow at residues 73 to 222 (QAEK…NLIM) and 254 to 431 (DIER…GWSV). The region spanning 483–816 (EEEELAEILQ…KEWKALADEY (334 aa)) is the PDEase domain. Catalysis depends on His559, which acts as the Proton donor. 4 residues coordinate a divalent metal cation: His563, His599, Asp600, and Asp720. The disordered stretch occupies residues 823-859 (LEEEKQKQQAAKQAASGNQPGGNPLQGAPASKSCCIQ). Residue Cys856 is modified to Cysteine methyl ester. Cys856 carries S-farnesyl cysteine lipidation. Positions 857-859 (CIQ) are cleaved as a propeptide — removed in mature form.

This sequence belongs to the cyclic nucleotide phosphodiesterase family. In terms of assembly, oligomer composed of two catalytic chains (alpha and beta), an inhibitory chain (gamma) and the delta chain. The cofactor is a divalent metal cation.

It localises to the cell membrane. It is found in the cell projection. The protein resides in the cilium. The protein localises to the photoreceptor outer segment. It catalyses the reaction 3',5'-cyclic GMP + H2O = GMP + H(+). Its function is as follows. Rod-specific cGMP phosphodiesterase that catalyzes the hydrolysis of 3',5'-cyclic GMP. This protein participates in processes of transmission and amplification of the visual signal. The protein is Rod cGMP-specific 3',5'-cyclic phosphodiesterase subunit alpha of Mus musculus (Mouse).